The chain runs to 388 residues: MKIHEYQGKEILRQAGVPVPRGIPAFTVQEAVEAAQKLGGPVWVVKAQIHAGGRGKGGGVKLARSIDEVKKLAGEILGMQLVTHQTGPEGQKVRRLLIEDGADIQKEYYVSAVTDRASQRVAMIVSSEGGMSIEDVAHDTPEKIITEIVDPATGLTVAQATKLANAIGVPAGSTAQAVDVLQKVYKVYMDTDASLVEINPMILEGNGNIKAIDAKFNFDDNALFRHPEIVAYRDLDEEDPAEVEASKFDLAYISLDGNIGCLVNGAGLAMATMDTIKLFGASPANFLDVGGGATPEKVTEAFKIMLKNPNVKVILVNIFGGIMKCDTIAAGVIAACKAVNLNVPLVVRMKGTNEELGKKLLAESGLPIISADTMADAAQKAVAAVKAA.

The region spanning 9–244 (KEILRQAGVP…LDEEDPAEVE (236 aa)) is the ATP-grasp domain. ATP contacts are provided by residues K46, 53 to 55 (GRG), E99, A102, and E107. Residues N199 and D213 each coordinate Mg(2+). Substrate contacts are provided by residues N264 and 321-323 (GIM).

The protein belongs to the succinate/malate CoA ligase beta subunit family. Heterotetramer of two alpha and two beta subunits. Requires Mg(2+) as cofactor.

It catalyses the reaction succinate + ATP + CoA = succinyl-CoA + ADP + phosphate. It carries out the reaction GTP + succinate + CoA = succinyl-CoA + GDP + phosphate. The protein operates within carbohydrate metabolism; tricarboxylic acid cycle; succinate from succinyl-CoA (ligase route): step 1/1. Its function is as follows. Succinyl-CoA synthetase functions in the citric acid cycle (TCA), coupling the hydrolysis of succinyl-CoA to the synthesis of either ATP or GTP and thus represents the only step of substrate-level phosphorylation in the TCA. The beta subunit provides nucleotide specificity of the enzyme and binds the substrate succinate, while the binding sites for coenzyme A and phosphate are found in the alpha subunit. This is Succinate--CoA ligase [ADP-forming] subunit beta from Albidiferax ferrireducens (strain ATCC BAA-621 / DSM 15236 / T118) (Rhodoferax ferrireducens).